The following is a 199-amino-acid chain: NAD(P)H dehydrogenase (quinone) (199 aa).

The region spanning 4 to 190 (VLVLYYSMYG…AIARFQGKHV (187 aa)) is the Flavodoxin-like domain. FMN contacts are provided by residues 10–15 (SMYGHI) and 79–81 (TRF). Tyrosine 12 contacts NAD(+). Tryptophan 99 contacts substrate. FMN-binding positions include 114–119 (STGTGG) and histidine 134.

It belongs to the WrbA family. Requires FMN as cofactor.

It carries out the reaction a quinone + NADH + H(+) = a quinol + NAD(+). The enzyme catalyses a quinone + NADPH + H(+) = a quinol + NADP(+). This chain is NAD(P)H dehydrogenase (quinone), found in Marinobacter nauticus (strain ATCC 700491 / DSM 11845 / VT8) (Marinobacter aquaeolei).